Reading from the N-terminus, the 408-residue chain is Histone acetyltransferase type B subunit 2 (408 aa).

5 WD repeats span residues 120–160 (KHEQ…KDHG), 167–207 (YHKE…NKSP), 213–253 (VHTD…AIQK), 255–295 (SVSS…KPLH), and 299–339 (GHED…AEQQ). Residues 341–345 (DDAYD) form an interaction with the histone H4 N-terminus region. The WD 6 repeat unit spans residues 356–396 (GHRSPVNEFSHNSNVPWLMCSVEEENVLQIWKPANKIVRPP).

The protein belongs to the WD repeat RBAP46/RBAP48/MSI1 family. As to quaternary structure, component of the HAT-B complex composed of at least HAT1 and HAT2. The HAT-B complex binds to histone H4 tail.

The protein resides in the cytoplasm. It is found in the nucleus. Regulatory subunit of the histone acetylase B (HAT-B) complex. The complex acetylates 'Lys-12' of histone H4 which is required for telomeric silencing. The polypeptide is Histone acetyltransferase type B subunit 2 (HAT2) (Kluyveromyces lactis (strain ATCC 8585 / CBS 2359 / DSM 70799 / NBRC 1267 / NRRL Y-1140 / WM37) (Yeast)).